Here is a 143-residue protein sequence, read N- to C-terminus: Nuclear transcription factor Y subunit B-4 (143 aa).

A disordered region spans residues 1–23 (MSEGFDGTENGGGGGGGGVGKEQ). Over residues 9-20 (ENGGGGGGGGVG) the composition is skewed to gly residues. Residues 27–33 (LPIANIG) mediate DNA binding. A subunit association domain (SAD) region spans residues 54–65 (VQECVSEFISFI). Positions 117-130 (KGSRASELPVKKDV) are enriched in basic and acidic residues. A disordered region spans residues 117–143 (KGSRASELPVKKDVVLNGDPGSSFEGM).

This sequence belongs to the NFYB/HAP3 subunit family. As to quaternary structure, heterotrimeric transcription factor composed of three components, NF-YA, NF-YB and NF-YC. NF-YB and NF-YC must interact and dimerize for NF-YA association and DNA binding. Ubiquitous.

Its subcellular location is the nucleus. Its function is as follows. Component of the NF-Y/HAP transcription factor complex. The NF-Y complex stimulates the transcription of various genes by recognizing and binding to a CCAAT motif in promoters. May regulate the expression of photosynthetic genes, and may be involved in chloroplast and amyloplast development. This Oryza sativa subsp. japonica (Rice) protein is Nuclear transcription factor Y subunit B-4 (NFYB4).